The following is a 963-amino-acid chain: Transcription factor cbf12 (963 aa).

Disordered regions lie at residues 130 to 207 (NPSN…SQGL) and 248 to 289 (VNMN…PPQK). Polar residues-rich tracts occupy residues 143–207 (FENN…SQGL) and 249–289 (NMNS…PPQK).

The protein belongs to the Su(H) family.

The protein resides in the nucleus. Its function is as follows. Transcription factor which function may be to trigger the increase of adhesion at stationary phase, possibly by counteracting or replacing cbf11 at the respective promoters. May also play a cbf11-antagonistic role in the regulation of a number of other important processes such as extracellular material production, colony morphogenesis, ploidy maintenance, or meiosis. The sequence is that of Transcription factor cbf12 (cbf12) from Schizosaccharomyces pombe (strain 972 / ATCC 24843) (Fission yeast).